Consider the following 728-residue polypeptide: Polyribonucleotide nucleotidyltransferase (728 aa).

Residues Asp-487 and Asp-493 each coordinate Mg(2+). The KH domain maps to 554–613 (PRIEVITVPTDKIREVIGTGGKVIREIVEKTGAKVDISDDGTIKVASSDGESIRKAIAWI). The 69-residue stretch at 623–691 (GKIYEGTVVK…DRGKVRLSMK (69 aa)) folds into the S1 motif domain. Residues 697–707 (TGEEIVYENEP) are compositionally biased toward acidic residues. Residues 697 to 728 (TGEEIVYENEPAEQPREKREGGGGRGRRRERD) form a disordered region. The span at 709–718 (EQPREKREGG) shows a compositional bias: basic and acidic residues.

Belongs to the polyribonucleotide nucleotidyltransferase family. It depends on Mg(2+) as a cofactor.

It localises to the cytoplasm. The catalysed reaction is RNA(n+1) + phosphate = RNA(n) + a ribonucleoside 5'-diphosphate. In terms of biological role, involved in mRNA degradation. Catalyzes the phosphorolysis of single-stranded polyribonucleotides processively in the 3'- to 5'-direction. This chain is Polyribonucleotide nucleotidyltransferase, found in Parvibaculum lavamentivorans (strain DS-1 / DSM 13023 / NCIMB 13966).